The sequence spans 177 residues: MRKIWELKKKEAQKEKNASGISPAQIRIQKDVTDLEIPSTMSTSWPDPIKLNVLHLEIRPDEGYYKGGKFKFRIQIDDNYPHDPPKVKCLNKIYHPNIDIEGNVCLNILRQDWNPVLNLNSILVGLQFLFLSPNAEDPLNKEAAADLHKDPQGFASRVRTAMKGGLVNGISFDNVMA.

The UBC core domain occupies 23-167 (PAQIRIQKDV…VRTAMKGGLV (145 aa)). The active-site Glycyl thioester intermediate is C105.

It belongs to the ubiquitin-conjugating enzyme family. UBC12 subfamily.

The enzyme catalyses [E1 NEDD8-activating enzyme]-S-[NEDD8 protein]-yl-L-cysteine + [E2 NEDD8-conjugating enzyme]-L-cysteine = [E1 NEDD8-activating enzyme]-L-cysteine + [E2 NEDD8-conjugating enzyme]-S-[NEDD8-protein]-yl-L-cysteine.. It functions in the pathway protein modification; protein neddylation. Functionally, accepts the ubiquitin-like protein NEDD8/RUB1 from the UBA3-ULA1 E1 complex and catalyzes its covalent attachment to other proteins. This is NEDD8-conjugating enzyme ubc12 (ubc12) from Schizosaccharomyces pombe (strain 972 / ATCC 24843) (Fission yeast).